We begin with the raw amino-acid sequence, 912 residues long: Cadherin-2 (912 aa).

The N-terminal stretch at 1–28 (MCRIAGTPPRILPPLALMLLAALQQAPI) is a signal peptide. The propeptide occupies 29-164 (KATCEDMLCK…DSSHLKRQKR (136 aa)). Cadherin domains lie at 165–272 (DWVI…RPEF), 273–387 (LHQV…PPEF), 388–502 (TAMT…SPYF), 503–609 (VPNP…DNAP), and 610–720 (QVNP…DVDR). The Extracellular portion of the chain corresponds to 165 to 729 (DWVIPPINLP…RIVGAGLGTG (565 aa)). Positions 175, 231, 233, 264, 265, 266, 267, and 268 each coordinate Ca(2+). Asparagine 278 carries N-linked (GlcNAc...) asparagine glycosylation. Positions 298, 300, and 306 each coordinate Ca(2+). Asparagine 330 carries an N-linked (GlcNAc...) asparagine glycan. Ca(2+) is bound at residue aspartate 358. N-linked (GlcNAc...) asparagine glycosylation is found at asparagine 407, asparagine 578, asparagine 628, and asparagine 657. A helical membrane pass occupies residues 730-752 (AIIAILLCIIILLILVLMFVVWM). Residues 753-912 (KRRDKERQAK…LADMYGGGDD (160 aa)) are Cytoplasmic-facing. Low complexity predominate over residues 869 to 886 (SGSTAGSLSSLNSSSSGG). A disordered region spans residues 869 to 890 (SGSTAGSLSSLNSSSSGGEQDY).

As to quaternary structure, homodimer (via extracellular region). Can also form heterodimers with other cadherins (via extracellular region). Dimerization occurs in trans, i.e. with a cadherin chain from another cell. Interacts with CTNNA2. As to expression, expressed at intercalated disks in the heart (at protein level).

Its subcellular location is the cell membrane. It is found in the sarcolemma. The protein resides in the cell junction. The protein localises to the cell surface. It localises to the desmosome. Its subcellular location is the adherens junction. Its function is as follows. Calcium-dependent cell adhesion protein; preferentially mediates homotypic cell-cell adhesion. Cadherins may thus contribute to the sorting of heterogeneous cell types, and thereby play an important role during embryonic development. Required for proper neurite branching, and pre- and postsynaptic organization. In Gallus gallus (Chicken), this protein is Cadherin-2 (CDH2).